Reading from the N-terminus, the 361-residue chain is Aromatic amino acid aminotransferase (361 aa).

At Lys-215 the chain carries N6-(pyridoxal phosphate)lysine.

It belongs to the class-II pyridoxal-phosphate-dependent aminotransferase family. In terms of assembly, homodimer. Pyridoxal 5'-phosphate serves as cofactor.

It carries out the reaction an aromatic L-alpha-amino acid + 2-oxoglutarate = an aromatic oxo-acid + L-glutamate. Aminotransferase that catalyzes the conversion of aromatic amino acids and 2-oxoglutarate into corresponding aromatic oxo acids and L-glutamate. In Mycolicibacterium smegmatis (strain ATCC 700084 / mc(2)155) (Mycobacterium smegmatis), this protein is Aromatic amino acid aminotransferase.